Here is a 506-residue protein sequence, read N- to C-terminus: NAD(P)H-quinone oxidoreductase subunit 2 (506 aa).

13 consecutive transmembrane segments (helical) span residues 14-34, 42-62, 79-99, 108-128, 132-152, 167-187, 206-226, 240-260, 276-296, 302-322, 330-350, 374-394, and 409-429; these read AIIP…VDLA, WAPS…TLQW, LAIA…LISW, PIGE…LLCG, LISV…LSGY, LLVG…LYGL, FITS…IAAV, PTPV…AFAI, LLFT…ALAQ, MLAY…VSGT, VLYL…VILF, LGLS…GFFG, and LLVI…ISVI.

It belongs to the complex I subunit 2 family. NDH-1 can be composed of about 15 different subunits; different subcomplexes with different compositions have been identified which probably have different functions.

It localises to the cellular thylakoid membrane. It catalyses the reaction a plastoquinone + NADH + (n+1) H(+)(in) = a plastoquinol + NAD(+) + n H(+)(out). The catalysed reaction is a plastoquinone + NADPH + (n+1) H(+)(in) = a plastoquinol + NADP(+) + n H(+)(out). Its function is as follows. NDH-1 shuttles electrons from an unknown electron donor, via FMN and iron-sulfur (Fe-S) centers, to quinones in the respiratory and/or the photosynthetic chain. The immediate electron acceptor for the enzyme in this species is believed to be plastoquinone. Couples the redox reaction to proton translocation, and thus conserves the redox energy in a proton gradient. Cyanobacterial NDH-1 also plays a role in inorganic carbon-concentration. The sequence is that of NAD(P)H-quinone oxidoreductase subunit 2 from Prochlorococcus marinus (strain MIT 9301).